Here is a 509-residue protein sequence, read N- to C-terminus: Cytochrome P450 monooxygenase aba1 (509 aa).

The first 31 residues, 1 to 31, serve as a signal peptide directing secretion; the sequence is MSNSILNLGSFACLLSLGSIVLWYTISAVLA. Asparagine 402 is a glycosylation site (N-linked (GlcNAc...) asparagine). A heme-binding site is contributed by cysteine 451. Asparagine 462 carries N-linked (GlcNAc...) asparagine glycosylation.

Belongs to the cytochrome P450 family. It depends on heme as a cofactor.

Its pathway is hormone biosynthesis. In terms of biological role, cytochrome P450 monooxygenase; part of the gene cluster that mediates the biosynthesis of abscisic acid (ABA), a phytohormone that acts antagonistically toward salicylic acid (SA), jasmonic acid (JA) and ethylene (ETH) signaling, to impede plant defense responses. The first step of the pathway catalyzes the reaction from farnesyl diphosphate to alpha-ionylideneethane performed by the alpha-ionylideneethane synthase aba3 via a three-step reaction mechanism involving 2 neutral intermediates, beta-farnesene and allofarnesene. The cytochrome P450 monooxygenase aba1 might then be involved in the conversion of alpha-ionylideneethane to alpha-ionylideneacetic acid. Alpha-ionylideneacetic acid is further converted to abscisic acid in 2 steps involving the cytochrome P450 monooxygenase aba2 and the short-chain dehydrogenase/reductase aba4, via the intermediates 1'-deoxy-ABA or 1',4'-trans-diol-ABA, depending on the order of action of these 2 enzymes. Aba2 is responsible for the hydroxylation of carbon atom C-1' and aba4 might be involved in the oxidation of the C-4' carbon atom. This is Cytochrome P450 monooxygenase aba1 (aba1) from Botryotinia fuckeliana (strain B05.10) (Noble rot fungus).